Here is a 22-residue protein sequence, read N- to C-terminus: Myofibril-bound serine protease (22 aa).

Residues 1-22 (IVGGYECEAYSKPYQVSINLGY) form the Peptidase S1 domain.

Belongs to the peptidase S1 family. As to expression, detected in skeletal muscle (at protein level).

Its subcellular location is the cytoplasm. Functionally, serine protease which degrades the myosin heavy chain and tropomyosin, but not actin. Selectively cleaves Arg-|-Xaa bonds. The protein is Myofibril-bound serine protease of Saurida undosquamis (Brushtooth lizardfish).